A 463-amino-acid polypeptide reads, in one-letter code: Senescence/dehydration-associated protein At3g51250 (463 aa).

A compositionally biased stretch (basic and acidic residues) spans methionine 1–arginine 12. Disordered stretches follow at residues methionine 1–threonine 31, proline 52–threonine 74, and isoleucine 146–serine 172. The span at valine 19–threonine 31 shows a compositional bias: polar residues. The 169-residue stretch at isoleucine 269–alanine 437 folds into the Senescence domain.

The chain is Senescence/dehydration-associated protein At3g51250 from Arabidopsis thaliana (Mouse-ear cress).